A 144-amino-acid polypeptide reads, in one-letter code: MEDATFHFKDPASPQEISDIEQKLGVTFPNDYKEFLLQHNGMEMFDGIEILSLEGIIEYNEVQDFPEGYVLIGYHFDGRYVIDTNKSKNGLGYMLYLDSIDDIEDAINLDSNFEIWFDMLVSLNGTKYWEVNPNLQEYYKLVSE.

This is an uncharacterized protein from Bacillus subtilis (strain 168).